Consider the following 1224-residue polypeptide: uncharacterized protein (1224 aa).

Disordered regions lie at residues 1 to 67 (MNQD…SSSI), 111 to 151 (QQSH…PPPL), 193 to 270 (QTEL…DPNI), 316 to 416 (DYNN…TVKK), 430 to 957 (SDSG…QEEK), and 1078 to 1167 (SFLP…TSHV). Residues 10–48 (SFHSNNNSNSNHHHSYNNSINSGSSSSGSNNSSNNNSFN) show a composition bias toward low complexity. The span at 49-58 (DEIEGGEIQE) shows a compositional bias: acidic residues. 3 stretches are compositionally biased toward low complexity: residues 126–140 (SSSS…SSSS), 193–212 (QTEL…SSPP), and 228–241 (SAPT…SVSS). The span at 242–255 (LTQPQKPKSVQYSQ) shows a compositional bias: polar residues. Residues 260 to 270 (EIREEKVDPNI) are compositionally biased toward basic and acidic residues. The span at 316–338 (DYNNSNSNNSNNNNNNNNSITEN) shows a compositional bias: low complexity. Residues 341–353 (DKMINNQPSSTNS) are compositionally biased toward polar residues. Composition is skewed to low complexity over residues 379 to 413 (TTTT…TTPT) and 430 to 450 (SDSG…TSTP). 2 stretches are compositionally biased toward basic and acidic residues: residues 451–585 (KSKD…DKKK) and 630–646 (EIDK…KVES). Residues 662–719 (TTTTTTSTSSSSSLPSLSSSSSSLPLPSSSSSSSSSSSSSSSSSSSSSSSSSSSTTST) show a composition bias toward low complexity. Residues 727–750 (PPPPPQQPPPPPPQQPPPPPPPIN) are compositionally biased toward pro residues. A compositionally biased stretch (basic and acidic residues) spans 755–892 (SEHDKKIIEK…SDRDRDRKDS (138 aa)). Low complexity predominate over residues 893–933 (NSNNNSNNNNNNNNNNNNNNNNNNNNKKDNNNNNNNNNNNN). The span at 948 to 957 (TPKKTKQEEK) shows a compositional bias: basic and acidic residues. A coiled-coil region spans residues 950–991 (KKTKQEEKLIRSQIDQIKEDAKDLKKLAKELQSKNQNECLEM). 2 stretches are compositionally biased toward low complexity: residues 1078 to 1108 (SFLP…TAPL) and 1114 to 1165 (NPSE…PNTS).

This is an uncharacterized protein from Dictyostelium discoideum (Social amoeba).